The sequence spans 177 residues: Large ribosomal subunit protein uL6 (177 aa).

The protein belongs to the universal ribosomal protein uL6 family. In terms of assembly, part of the 50S ribosomal subunit.

This protein binds to the 23S rRNA, and is important in its secondary structure. It is located near the subunit interface in the base of the L7/L12 stalk, and near the tRNA binding site of the peptidyltransferase center. The polypeptide is Large ribosomal subunit protein uL6 (Pectobacterium atrosepticum (strain SCRI 1043 / ATCC BAA-672) (Erwinia carotovora subsp. atroseptica)).